The primary structure comprises 120 residues: UPF0231 protein YacL (120 aa).

This sequence belongs to the UPF0231 family.

This is UPF0231 protein YacL from Salmonella heidelberg (strain SL476).